A 106-amino-acid chain; its full sequence is Iron-sulfur cluster assembly protein CyaY (106 aa).

It belongs to the frataxin family.

Involved in iron-sulfur (Fe-S) cluster assembly. May act as a regulator of Fe-S biogenesis. The chain is Iron-sulfur cluster assembly protein CyaY from Colwellia psychrerythraea (strain 34H / ATCC BAA-681) (Vibrio psychroerythus).